A 509-amino-acid chain; its full sequence is Lysine--tRNA ligase (509 aa).

Residues E417 and E424 each coordinate Mg(2+).

This sequence belongs to the class-II aminoacyl-tRNA synthetase family. In terms of assembly, homodimer. Mg(2+) serves as cofactor.

The protein resides in the cytoplasm. It carries out the reaction tRNA(Lys) + L-lysine + ATP = L-lysyl-tRNA(Lys) + AMP + diphosphate. This is Lysine--tRNA ligase from Blochmanniella pennsylvanica (strain BPEN).